The following is a 316-amino-acid chain: Ribose-phosphate pyrophosphokinase (316 aa).

ATP-binding positions include 40-42 (DGE) and 99-100 (RQ). Positions 133 and 174 each coordinate Mg(2+). Lysine 197 is a catalytic residue. Residues arginine 199, aspartate 223, and 227 to 231 (DTAGT) each bind D-ribose 5-phosphate.

Belongs to the ribose-phosphate pyrophosphokinase family. Class I subfamily. As to quaternary structure, homohexamer. Mg(2+) serves as cofactor.

The protein localises to the cytoplasm. It catalyses the reaction D-ribose 5-phosphate + ATP = 5-phospho-alpha-D-ribose 1-diphosphate + AMP + H(+). It participates in metabolic intermediate biosynthesis; 5-phospho-alpha-D-ribose 1-diphosphate biosynthesis; 5-phospho-alpha-D-ribose 1-diphosphate from D-ribose 5-phosphate (route I): step 1/1. In terms of biological role, involved in the biosynthesis of the central metabolite phospho-alpha-D-ribosyl-1-pyrophosphate (PRPP) via the transfer of pyrophosphoryl group from ATP to 1-hydroxyl of ribose-5-phosphate (Rib-5-P). This Fusobacterium nucleatum subsp. nucleatum (strain ATCC 25586 / DSM 15643 / BCRC 10681 / CIP 101130 / JCM 8532 / KCTC 2640 / LMG 13131 / VPI 4355) protein is Ribose-phosphate pyrophosphokinase.